The following is a 46-amino-acid chain: Aspartate aminotransferase 1 (46 aa).

Belongs to the class-I pyridoxal-phosphate-dependent aminotransferase family. In terms of assembly, homodimer. Requires pyridoxal 5'-phosphate as cofactor.

It carries out the reaction L-aspartate + 2-oxoglutarate = oxaloacetate + L-glutamate. In terms of biological role, important for the metabolism of amino acids and Krebs-cycle related organic acids. In plants, it is involved in nitrogen metabolism and in aspects of carbon and energy metabolism. This is Aspartate aminotransferase 1 from Pseudotsuga menziesii (Douglas-fir).